We begin with the raw amino-acid sequence, 32 residues long: Enhancer of rudimentary homolog (32 aa).

This sequence belongs to the E(R) family. As to quaternary structure, homodimer. Component of the methylosome, a 20S complex containing at least CLNS1A/pICln, PRMT5/SKB1, WDR77/MEP50, PRMT1 and ERH. Interacts with CHTOP.

Its subcellular location is the nucleus. Its function is as follows. May have a role in the cell cycle. AP 3910 has antibacterial activity against B.megaterium. The polypeptide is Enhancer of rudimentary homolog (ERH) (Sus scrofa (Pig)).